The primary structure comprises 1149 residues: ATP-dependent helicase/deoxyribonuclease subunit B (1149 aa).

8–15 (GRAGSGKS) lines the ATP pocket. [4Fe-4S] cluster-binding residues include cysteine 788, cysteine 1106, cysteine 1109, and cysteine 1115.

It belongs to the helicase family. AddB/RexB type 1 subfamily. Heterodimer of AddA and AddB. Requires Mg(2+) as cofactor. The cofactor is [4Fe-4S] cluster.

In terms of biological role, the heterodimer acts as both an ATP-dependent DNA helicase and an ATP-dependent, dual-direction single-stranded exonuclease. Recognizes the chi site generating a DNA molecule suitable for the initiation of homologous recombination. The AddB subunit has 5' -&gt; 3' nuclease activity but not helicase activity. The sequence is that of ATP-dependent helicase/deoxyribonuclease subunit B from Ruminiclostridium cellulolyticum (strain ATCC 35319 / DSM 5812 / JCM 6584 / H10) (Clostridium cellulolyticum).